A 361-amino-acid chain; its full sequence is MGNIHIQTKSKEYDVHVGKEALSHLTMIVQNMQPAVSNVMIISDEAVASLHLQTVIDALQVEQDVFSFVVPSGEKEKSFENFYAAHTSALENKLDRNSLILALGGGMIGDLAGFVAASFMRGIRFVQVPTTLLAHDSAVGGKVAINHPLGKNMIGAFHQPEAVVYHTPFLQSLPKKEWRSGYAEVIKHALIGDVELYHWLKEEVQTLADLRDEKLIHILTKAIPVKANVVSQDETEKGVRAHLNFGHTLGHALEKELGYGNITHGDGVAVGMLFAIFLSEQVYKVNLAYEDMKQWFLKYGYPKMPRDLNVERLVQLMKQDKKANAGAIHMVLMQEYGVVNVVSISDETVHIALEAFQKDMV.

Residues 72–77 (SGEKEK), 130–131 (TT), Lys142, and Lys151 each bind NAD(+). Positions 184, 247, and 264 each coordinate Zn(2+).

This sequence belongs to the sugar phosphate cyclases superfamily. Dehydroquinate synthase family. It depends on Co(2+) as a cofactor. Zn(2+) serves as cofactor. Requires NAD(+) as cofactor.

The protein localises to the cytoplasm. The catalysed reaction is 7-phospho-2-dehydro-3-deoxy-D-arabino-heptonate = 3-dehydroquinate + phosphate. It functions in the pathway metabolic intermediate biosynthesis; chorismate biosynthesis; chorismate from D-erythrose 4-phosphate and phosphoenolpyruvate: step 2/7. In terms of biological role, catalyzes the conversion of 3-deoxy-D-arabino-heptulosonate 7-phosphate (DAHP) to dehydroquinate (DHQ). The polypeptide is 3-dehydroquinate synthase (Bacillus cereus (strain G9842)).